Reading from the N-terminus, the 955-residue chain is Glutamyl aminopeptidase (955 aa).

At 1-17 the chain is on the cytoplasmic side; the sequence is MDIEDKTSKMHCMKGKH. Residues 18–38 traverse the membrane as a helical; Signal-anchor for type II membrane protein segment; that stretch reads VVIICGVVIAVGLILGLGLGL. Residues 39–955 lie on the Extracellular side of the membrane; that stretch reads GLDTKACNPP…LENSEHSNFA (917 aa). N-linked (GlcNAc...) asparagine glycans are attached at residues Asn-118 and Asn-192. A substrate-binding site is contributed by Glu-218. 2 N-linked (GlcNAc...) asparagine glycosylation sites follow: Asn-319 and Asn-335. 352-356 provides a ligand contact to substrate; it reads GAMEN. His-388 contributes to the Zn(2+) binding site. Glu-389 (proton acceptor) is an active-site residue. The Zn(2+) site is built by His-392 and Glu-411. 8 N-linked (GlcNAc...) asparagine glycosylation sites follow: Asn-458, Asn-547, Asn-584, Asn-592, Asn-674, Asn-759, Asn-823, and Asn-836. Arg-882 serves as a coordination point for substrate.

This sequence belongs to the peptidase M1 family. As to quaternary structure, homodimer; disulfide-linked. Zn(2+) is required as a cofactor. N-glycosylated. Glycosylation counts for an increased mass of about 32% of the protein mass (about 48 kDa).

Its subcellular location is the cell membrane. The enzyme catalyses Release of N-terminal glutamate (and to a lesser extent aspartate) from a peptide.. With respect to regulation, substrate specificity is modulated by calcium which enhances the enzymatic activity for cleavage of acidic residues while reducing its activity with neutral and basic residues. Hydrolytic activity is inhibited by the aminopeptidase inhibitor (Leu and acidic inhibitor) amastatin, but not by bestatin (aminopeptidase inhibitor Leu inhibitor), leupeptin, pepstatin A and PMSF. Its hydrolytic activity is also strongly reduced by zinc ions, with a complete inhibition at 0.5 mM, and moderately inhibited by cobalt and copper ions. Venom protein that cleaves N-terminal acidic residues from peptides with high potency in presence of calcium. It may have several roles in venom including alteration of blood pressure by cleaving circulating angiotensin-2, general degradation of host tissue, increase of permeability to other venom components, and/or processing of other toxins in the venom. This is Glutamyl aminopeptidase from Bitis rhinoceros (West African gaboon viper).